The following is a 291-amino-acid chain: Homeobox protein knotted-1-like 7 (291 aa).

Positions 194 to 214 constitute an ELK domain; the sequence is ELKLELKQGFKSRIEDVREEI. The segment at residues 215 to 278 is a DNA-binding region (homeobox; TALE-type); it reads MRKRRAGKLP…NQRKRNWHNN (64 aa).

It belongs to the TALE/KNOX homeobox family. May form heterodimeric complex with the TALE/BELL proteins. Interacts with OFP1, OFP2, OFP3, OFP4 and OFP6.

Its subcellular location is the nucleus. May be involved in secondary cell wall biosynthesis. The sequence is that of Homeobox protein knotted-1-like 7 (KNAT7) from Arabidopsis thaliana (Mouse-ear cress).